Here is a 958-residue protein sequence, read N- to C-terminus: Coiled-coil domain-containing protein 187 (958 aa).

Over residues 116–132 (SSVSSGRMSGSSGGHES) the composition is skewed to low complexity. 4 disordered regions span residues 116–160 (SSVS…SDPR), 345–447 (ELTR…PRFF), 470–492 (QDIS…QRPW), and 510–602 (EPSP…KAQA). 2 stretches are compositionally biased toward polar residues: residues 374–398 (LQST…NSSL) and 470–491 (QDIS…SQRP). Residues 536 to 545 (SSPSSKGKSA) are compositionally biased toward low complexity. A coiled-coil region spans residues 718-743 (KQARLQALETMAEALRQRVDILTTKL). Residues 916-958 (EVKKEGLVTPWTTRSCGKGEPADRPWAGWSGGQGGLPWASSTA) form a disordered region.

This chain is Coiled-coil domain-containing protein 187, found in Mus musculus (Mouse).